A 1819-amino-acid polypeptide reads, in one-letter code: Non-reducing polyketide synthase nscA (1819 aa).

The interval 25–277 (RRLDQHSKDR…PLPVYDGLCH (253 aa)) is N-terminal acylcarrier protein transacylase domain (SAT). The region spanning 413–846 (SSKLAIVGMA…GGNTTLLLED (434 aa)) is the Ketosynthase family 3 (KS3) domain. Catalysis depends on for beta-ketoacyl synthase activity residues C586, H721, and H764. A malonyl-CoA:ACP transacylase (MAT) domain region spans residues 952-1249 (FTSQGAYYHG…MIPSAPAMSS (298 aa)). The product template (PT) domain stretch occupies residues 1339 to 1658 (TSLVHQITAE…RLLMDRFFSP (320 aa)). Residues 1343-1479 (HQITAETVEA…AMIRFEDPMA (137 aa)) form an N-terminal hotdog fold region. In terms of domain architecture, PKS/mFAS DH spans 1343 to 1653 (HQITAETVEA…IRRVPRLLMD (311 aa)). The active-site Proton acceptor; for dehydratase activity is H1375. The interval 1507 to 1653 (ASRLSKPLAY…IRRVPRLLMD (147 aa)) is C-terminal hotdog fold. The Proton donor; for dehydratase activity role is filled by D1564. A disordered region spans residues 1703-1742 (SSTMASKAPEPAPLLATSSESSTPKESPIVTPAESEREDP). Over residues 1719 to 1730 (TSSESSTPKESP) the composition is skewed to low complexity. The 78-residue stretch at 1742 to 1819 (PVDNNMISQC…EMTAWIEEYC (78 aa)) folds into the Carrier domain. S1779 is modified (O-(pantetheine 4'-phosphoryl)serine).

Pantetheine 4'-phosphate is required as a cofactor.

It participates in secondary metabolite biosynthesis. In terms of biological role, non-reducing polyketide synthase; part of the gene cluster that mediates the biosynthesis of neosartoricin B, a prenylated anthracenone that probably exhibits T-cell antiproliferative activity, suggestive of a physiological role as an immunosuppressive agent. The non-reducing polyketide synthase nscA probably synthesizes and cyclizes the decaketide backbone. The hydrolase nscB then mediates the product release through hydrolysis followed by spontaneous decarboxylation. The prenyltransferase nscD catalyzes the addition of the dimethylallyl group to the aromatic C5. The FAD-dependent monooxygenase nscC is then responsible for the stereospecific hydroxylation at C2. Neosartoricin B can be converted into two additional compounds neosartoricins C and D. Neosartoricin C is a spirocyclic compound that is cyclized through the attack of C3 hydroxyl on C14, followed by dehydration. On the other hand, neosartoricin D is a further cyclized compound in which attack of C2 on C14 in neosartoricin C results in the formation of the acetal-containing dioxabicyclo-octanone ring. Both of these compounds are novel and possibly represent related metabolites of the gene cluster. In Trichophyton verrucosum (strain HKI 0517), this protein is Non-reducing polyketide synthase nscA.